The sequence spans 526 residues: Bifunctional purine biosynthesis protein PurH (526 aa).

The region spanning 1-148 (MSLNNIIKNA…KNYKDVIVIV (148 aa)) is the MGS-like domain.

This sequence belongs to the PurH family.

The catalysed reaction is (6R)-10-formyltetrahydrofolate + 5-amino-1-(5-phospho-beta-D-ribosyl)imidazole-4-carboxamide = 5-formamido-1-(5-phospho-D-ribosyl)imidazole-4-carboxamide + (6S)-5,6,7,8-tetrahydrofolate. The enzyme catalyses IMP + H2O = 5-formamido-1-(5-phospho-D-ribosyl)imidazole-4-carboxamide. Its pathway is purine metabolism; IMP biosynthesis via de novo pathway; 5-formamido-1-(5-phospho-D-ribosyl)imidazole-4-carboxamide from 5-amino-1-(5-phospho-D-ribosyl)imidazole-4-carboxamide (10-formyl THF route): step 1/1. It participates in purine metabolism; IMP biosynthesis via de novo pathway; IMP from 5-formamido-1-(5-phospho-D-ribosyl)imidazole-4-carboxamide: step 1/1. This chain is Bifunctional purine biosynthesis protein PurH, found in Buchnera aphidicola subsp. Schizaphis graminum (strain Sg).